Consider the following 218-residue polypeptide: tRNA (guanine-N(7)-)-methyltransferase (218 aa).

Residues Glu-43, Asp-68, Glu-101, and Asn-124 each coordinate S-adenosyl-L-methionine. Substrate is bound by residues Lys-128 and Asp-160.

The protein belongs to the class I-like SAM-binding methyltransferase superfamily. TrmB family.

The catalysed reaction is guanosine(46) in tRNA + S-adenosyl-L-methionine = N(7)-methylguanosine(46) in tRNA + S-adenosyl-L-homocysteine. The protein operates within tRNA modification; N(7)-methylguanine-tRNA biosynthesis. Its function is as follows. Catalyzes the formation of N(7)-methylguanine at position 46 (m7G46) in tRNA. In Acetivibrio thermocellus (strain ATCC 27405 / DSM 1237 / JCM 9322 / NBRC 103400 / NCIMB 10682 / NRRL B-4536 / VPI 7372) (Clostridium thermocellum), this protein is tRNA (guanine-N(7)-)-methyltransferase.